We begin with the raw amino-acid sequence, 825 residues long: NT-3 growth factor receptor (825 aa).

Positions 1-31 (MDVSLCPAKCSFWRIFLLGSVWLDYVGSVLA) are cleaved as a signal peptide. 2 disulfides stabilise this stretch: C32–C38 and C36–C45. The Extracellular portion of the chain corresponds to 32 to 429 (CPANCVCSKT…TVTHKPEEDT (398 aa)). Residues N68, N72, and N79 are each glycosylated (N-linked (GlcNAc...) asparagine). 2 LRR repeats span residues 104–125 (GLQKLTIRNSGLRSIQPRAFAK) and 128–149 (HLRYINLSSNRLTTLSWQLFQT). Residues N133 and N163 are each glycosylated (N-linked (GlcNAc...) asparagine). The LRRCT domain occupies 160–209 (NFFNCSCDIRWMQLWQEQGEAKLNNQNLYCINADGSQLPLFRMNISQCDL). 2 cysteine pairs are disulfide-bonded: C164-C189 and C166-C207. N-linked (GlcNAc...) asparagine glycans are attached at residues N203, N218, N232, N259, N267, N272, and N294. Ig-like C2-type domains are found at residues 210-300 (PEIS…VALT) and 309-382 (SLEE…IAKN). C231 and C284 form a disulfide bridge. C320 and C362 form a disulfide bridge. N-linked (GlcNAc...) asparagine glycosylation is found at N375 and N388. The chain crosses the membrane as a helical span at residues 430–453 (FGVSIAVGLAAFACVLLVVLFIMI). Residues 454–825 (NKYGRRSKFG…ATPIYLDILG (372 aa)) are Cytoplasmic-facing. The residue at position 493 (S493) is a Phosphoserine. Residue Y516 is modified to Phosphotyrosine; by autocatalysis. The Protein kinase domain maps to 538–825 (IVLKRELGEG…ATPIYLDILG (288 aa)). ATP contacts are provided by residues 544–552 (LGEGAFGKV) and K572. The active-site Proton acceptor is the D679. Phosphotyrosine; by autocatalysis is present on residues Y705, Y709, and Y710.

It belongs to the protein kinase superfamily. Tyr protein kinase family. Insulin receptor subfamily. In terms of assembly, exists in a dynamic equilibrium between monomeric (low affinity) and dimeric (high affinity) structures. Binds SH2B2. Interacts with SQSTM1 and KIDINS220. Interacts with PTPRS. Interacts with MAPK8IP3/JIP3. In terms of processing, ligand-mediated auto-phosphorylation.

Its subcellular location is the membrane. The catalysed reaction is L-tyrosyl-[protein] + ATP = O-phospho-L-tyrosyl-[protein] + ADP + H(+). Receptor tyrosine kinase involved in nervous system and probably heart development. Upon binding of its ligand NTF3/neurotrophin-3, NTRK3 autophosphorylates and activates different signaling pathways, including the phosphatidylinositol 3-kinase/AKT and the MAPK pathways, that control cell survival and differentiation. In Macaca fascicularis (Crab-eating macaque), this protein is NT-3 growth factor receptor (NTRK3).